The following is a 355-amino-acid chain: Uroporphyrinogen decarboxylase (355 aa).

Substrate-binding positions include 36-40 (RQAGR), Asp-85, Tyr-160, Ser-215, and His-334.

Belongs to the uroporphyrinogen decarboxylase family. In terms of assembly, homodimer.

The protein localises to the cytoplasm. The catalysed reaction is uroporphyrinogen III + 4 H(+) = coproporphyrinogen III + 4 CO2. It participates in porphyrin-containing compound metabolism; protoporphyrin-IX biosynthesis; coproporphyrinogen-III from 5-aminolevulinate: step 4/4. Its function is as follows. Catalyzes the decarboxylation of four acetate groups of uroporphyrinogen-III to yield coproporphyrinogen-III. This chain is Uroporphyrinogen decarboxylase, found in Rhodococcus jostii (strain RHA1).